An 85-amino-acid chain; its full sequence is HssA/B-like protein 59 (85 aa).

Belongs to the hssA/B family.

This chain is HssA/B-like protein 59 (hssl59), found in Dictyostelium discoideum (Social amoeba).